Consider the following 175-residue polypeptide: Cuticle protein 16.5, isoform B (175 aa).

19 tandem repeats follow at residues Ala17–Ala20, Ala25–Ala28, Ala31–Ala34, Ala38–Ala41, Ala44–Ala47, Ala51–Ala54, Ala57–Ala60, Ala64–Ala67, Ala70–Ala73, Ala77–Ala80, Ala83–Ala86, Ala91–Ala94, Ala99–Ala102, Ala106–Ala109, Ala134–Ala137, Ala144–Ala147, Ala151–Ala154, Ala158–Ala161, and Ala165–Ala168.

Its function is as follows. Component of the cuticle of migratory locust which contains more than 100 different structural proteins. This Locusta migratoria (Migratory locust) protein is Cuticle protein 16.5, isoform B.